A 127-amino-acid polypeptide reads, in one-letter code: Aspartate 1-decarboxylase (127 aa).

Serine 25 functions as the Schiff-base intermediate with substrate; via pyruvic acid in the catalytic mechanism. Pyruvic acid (Ser) is present on serine 25. A substrate-binding site is contributed by threonine 57. The active-site Proton donor is tyrosine 58. 73 to 75 (GAA) contacts substrate.

Belongs to the PanD family. Heterooctamer of four alpha and four beta subunits. Pyruvate is required as a cofactor. Is synthesized initially as an inactive proenzyme, which is activated by self-cleavage at a specific serine bond to produce a beta-subunit with a hydroxyl group at its C-terminus and an alpha-subunit with a pyruvoyl group at its N-terminus.

The protein localises to the cytoplasm. The catalysed reaction is L-aspartate + H(+) = beta-alanine + CO2. It participates in cofactor biosynthesis; (R)-pantothenate biosynthesis; beta-alanine from L-aspartate: step 1/1. In terms of biological role, catalyzes the pyruvoyl-dependent decarboxylation of aspartate to produce beta-alanine. This chain is Aspartate 1-decarboxylase, found in Bacillus pumilus (strain SAFR-032).